Here is a 437-residue protein sequence, read N- to C-terminus: Oxysterol-binding protein homolog 7 (437 aa).

Residues 23–32 (IASNAANSKP) show a composition bias toward polar residues. Residues 23–42 (IASNAANSKPSGADTDDIDE) form a disordered region. The OSBP-related domain (ORD) stretch occupies residues 54-393 (IISQLKPGCD…EDLDYYIYKH (340 aa)). Residues 64 to 69 (LSRITL), 126 to 129 (KPLN), and 157 to 158 (HH) contribute to the a 1,2-diacyl-sn-glycero-3-phospho-(1D-myo-inositol 4-phosphate) site. Residues 64-69 (LSRITL) and Asn-129 contribute to the a 1,2-diacyl-sn-glycero-3-phospho-L-serine site. Ser-183 contributes to the a 1,2-diacyl-sn-glycero-3-phospho-L-serine binding site. A Glycyl lysine isopeptide (Lys-Gly) (interchain with G-Cter in ubiquitin) cross-link involves residue Lys-276. A 1,2-diacyl-sn-glycero-3-phospho-(1D-myo-inositol 4-phosphate) is bound by residues Lys-351, Glu-355, and Arg-359.

It belongs to the OSBP family. In terms of assembly, interacts with the AAA ATPase VPS4; regulates OSH7 membrane association. VPS4 is required for membrane dissociation of OSH7.

The protein resides in the cytoplasm. It is found in the cell membrane. Its subcellular location is the endoplasmic reticulum membrane. The enzyme catalyses a 1,2-diacyl-sn-glycero-3-phospho-L-serine(in) = a 1,2-diacyl-sn-glycero-3-phospho-L-serine(out). Its function is as follows. ipid transport protein (LTP) involved in non-vesicular transfer of lipids between membranes. Functions in phosphoinositide-coupled directional transport of various lipids by carrying the lipid molecule in a hydrophobic pocket and transferring it between membranes through the cytosol. Involved in maintenance of intracellular sterol distribution and homeostasis. Involved in lipid countertransport between the endoplasmic reticulum and the plasma membrane. Specifically exchanges phosphatidylserine with phosphatidylinositol 4-phosphate (PI4P), delivering phosphatidylserine to the PM in exchange for PI4P, which is delivered to the ER-localized PI4P phosphatase SAC1 for degradation. Thus, by maintaining a PI4P gradient at the ER/PM interface, SAC1 drives PS transport. Binds phosphatidylserine and PI4P in a mutually exclusive manner. This is Oxysterol-binding protein homolog 7 from Saccharomyces cerevisiae (strain ATCC 204508 / S288c) (Baker's yeast).